Reading from the N-terminus, the 528-residue chain is Butyrophilin subfamily 2 member A2 (528 aa).

Positions methionine 1–alanine 29 are cleaved as a signal peptide. Over glutamine 30–alanine 249 the chain is Extracellular. The Ig-like V-type domain occupies valine 31–isoleucine 142. 3 N-linked (GlcNAc...) asparagine glycosylation sites follow: asparagine 47, asparagine 115, and asparagine 121. The cysteines at positions 52 and 126 are disulfide-linked. Residues proline 150 to glutamate 232 enclose the Ig-like C2-type domain. A helical membrane pass occupies residues valine 250–isoleucine 270. A coiled-coil region spans residues isoleucine 270 to arginine 320. Over asparagine 271–leucine 528 the chain is Cytoplasmic. One can recognise a B30.2/SPRY domain in the interval valine 311 to alanine 507.

It belongs to the immunoglobulin superfamily. BTN/MOG family. N-glycosylated.

The protein localises to the membrane. Inhibits the proliferation of CD4 and CD8 T-cells activated by anti-CD3 antibodies, T-cell metabolism and IL2 and IFNG secretion. The protein is Butyrophilin subfamily 2 member A2 (BTN2A2) of Pongo abelii (Sumatran orangutan).